The sequence spans 165 residues: uncharacterized protein (165 aa).

The tract at residues 28–97 (EASAPSGNPP…QLSQSLEVPT (70 aa)) is disordered. A compositionally biased stretch (pro residues) spans 34–47 (GNPPPPPPPPPPPI). 2 stretches are compositionally biased toward polar residues: residues 54–66 (KSLNSPPNHQLDN) and 73–94 (AQHTNKNYTTSNIKTQLSQSLE).

This is an uncharacterized protein from Rickettsia prowazekii (strain Madrid E).